Here is a 596-residue protein sequence, read N- to C-terminus: Lamin-B2 (596 aa).

Residues 1 to 20 (MASLPPHAGPATPLSPTRLS) are disordered. A head region spans residues 1-26 (MASLPPHAGPATPLSPTRLSRLQEKE). The residue at position 12 (threonine 12) is a Phosphothreonine. Serine 15 carries the post-translational modification Phosphoserine. An IF rod domain is found at 24 to 380 (EKEELRELND…KLLEGEEERL (357 aa)). Positions 27-61 (ELRELNDRLAHYIDRVRALELENDRLLLRISEKEE) are coil 1A. Lysine 59 is modified (N6-acetyllysine; alternate). Lysine 59 is covalently cross-linked (Glycyl lysine isopeptide (Lys-Gly) (interchain with G-Cter in SUMO2); alternate). The interval 62–73 (VTTREVSGIKTL) is linker 1. Positions 74–207 (YESELADARR…AFSKSVFEEE (134 aa)) are coil 1B. Glycyl lysine isopeptide (Lys-Gly) (interchain with G-Cter in SUMO2) cross-links involve residues lysine 173 and lysine 233. A linker 2 region spans residues 208–234 (VRETRRRHERRLVEVDSSRQQEYDFKM). The interval 235–378 (AQALEDLRSQ…YRKLLEGEEE (144 aa)) is coil 2. Serine 294 and serine 385 each carry phosphoserine. Residues 376–440 (EEERLKLSPS…ASRVSSGSRL (65 aa)) are disordered. The tract at residues 379-596 (RLKLSPSPSS…RTTSRGCRLM (218 aa)) is tail. Residues 382–403 (LSPSPSSRITISRATSSSSSSS) show a composition bias toward low complexity. Threonine 391 carries an O-linked (GlcNAc) threonine glycan. Serine 398, serine 400, and serine 402 each carry phosphoserine. Arginine 413 carries the post-translational modification Omega-N-methylarginine. A Nuclear localization signal motif is present at residues 415–420 (KRRRLE). Residues 425 to 439 (SGSPSRASRVSSGSR) are compositionally biased toward low complexity. One can recognise an LTD domain in the interval 438-559 (SRLAQQTVAT…VKAAKHSSVQ (122 aa)). Lysine 465 is covalently cross-linked (Glycyl lysine isopeptide (Lys-Gly) (interchain with G-Cter in SUMO2)). Phosphoserine is present on serine 473. The interval 552–596 (AAKHSSVQGRENGEEEEEEEAEFGEEDLFHQQGDPRTTSRGCRLM) is disordered. Acidic residues predominate over residues 564 to 577 (GEEEEEEEAEFGEE). Over residues 585-596 (DPRTTSRGCRLM) the composition is skewed to polar residues. Cysteine 593 is subject to Cysteine methyl ester. Residue cysteine 593 is the site of S-farnesyl cysteine attachment. Positions 594–596 (RLM) are cleaved as a propeptide — removed in mature form.

The protein belongs to the intermediate filament family. As to quaternary structure, dimer. Lamin dimers then assemble into dimeric head-to-tail polymers. Ultimately, two head-to-tail polymers assemble laterally into a protofilament with a uniformly shaped rod of 3.5 nm in diameter. Interacts with TMEM43. B-type lamins undergo a series of modifications, such as farnesylation and phosphorylation. Increased phosphorylation of the lamins occurs before envelope disintegration and probably plays a role in regulating lamin associations. In terms of processing, phosphorylation plays a key role in lamin organization, subcellular localization and nuclear envelope disintegration. Phosphorylation by CDK1 at Ser-15 and Ser-385 at the onset of mitosis drives lamin disassembly and nuclear envelope breakdown. As to expression, germ cell-specific.

The protein localises to the nucleus lamina. In terms of biological role, lamins are intermediate filament proteins that assemble into a filamentous meshwork, and which constitute the major components of the nuclear lamina, a fibrous layer on the nucleoplasmic side of the inner nuclear membrane. Lamins provide a framework for the nuclear envelope, bridging the nuclear envelope and chromatin, thereby playing an important role in nuclear assembly, chromatin organization, nuclear membrane and telomere dynamics. The structural integrity of the lamina is strictly controlled by the cell cycle, as seen by the disintegration and formation of the nuclear envelope in prophase and telophase, respectively. This Mus musculus (Mouse) protein is Lamin-B2 (Lmnb2).